The chain runs to 179 residues: MSRIGKLPIEIPKGVKISYIDSNLMVEGPKGSLGRRIMSGVSIDLTDNTITVSRDNDGIKSRSAHGLTRTLINNMVTGVTTGFETALEINGVGYRAELKGDVLNLSLGYSHPINFQLPKGINVEVDKMTKLLVKGIDKELVGQTAAKIRAFRGPEPYKGKGVKYANETILRKAGKTGKK.

The protein belongs to the universal ribosomal protein uL6 family. In terms of assembly, part of the 50S ribosomal subunit.

This protein binds to the 23S rRNA, and is important in its secondary structure. It is located near the subunit interface in the base of the L7/L12 stalk, and near the tRNA binding site of the peptidyltransferase center. This is Large ribosomal subunit protein uL6 from Geotalea uraniireducens (strain Rf4) (Geobacter uraniireducens).